Here is a 434-residue protein sequence, read N- to C-terminus: Beta-phenylalanine transaminase (434 aa).

Position 41 (Arg41) interacts with (S)-3-amino-3-phenylpropanoate. Gly132 to Thr133 lines the pyridoxal 5'-phosphate pocket. An N6-(pyridoxal phosphate)lysine modification is found at Lys267. Thr300 contacts pyridoxal 5'-phosphate.

Belongs to the class-III pyridoxal-phosphate-dependent aminotransferase family. Homodimer. Pyridoxal 5'-phosphate serves as cofactor.

The catalysed reaction is (S)-3-amino-3-phenylpropanoate + 2-oxoglutarate = 3-oxo-3-phenylpropanoate + L-glutamate. It carries out the reaction (S)-3-amino-3-phenylpropanoate + pyruvate = 3-oxo-3-phenylpropanoate + L-alanine. Its activity is regulated as follows. Is inhibited by 2-aminooxyacetate (AOA), a mimic of beta-alanine and a known inhibitor of aminotransferases. Its function is as follows. Aminotransferase that acts exclusively on beta-amino acids and exhibits a broad substrate range in vitro, accepting meta-, para- and, to a lesser extent, ortho-substituted beta-phenylalanine derivatives as amino donors, and 2-oxoglutarate or pyruvate as amino acceptors. Is highly enantioselective toward (S)-beta-phenylalanine (is not active with (R)-beta-phenylalanine) and derivatives with different substituents on the phenyl ring, allowing the kinetic resolution of various racemic beta-amino acids to yield (R)-beta-amino acids with &gt;95% enantiomeric excess (ee). Highly prefers aromatic beta-amino acids over aliphatic beta-amino acids; cannot use beta-alanine or beta-glutamate as substrate. Is likely involved in the beta-phenylalanine degradation pathway that allows V.paradoxus strain CBF3 to use beta-phenylalanine as a sole nitrogen source. In Variovorax paradoxus, this protein is Beta-phenylalanine transaminase.